The following is a 485-amino-acid chain: 3-isopropylmalate dehydratase large subunit (485 aa).

Disordered regions lie at residues 1–20 and 73–92; these read MSDASSTAPSQAGATSQSTG and PERTIATPDHNVPTSDRSLP. Positions 364, 424, and 427 each coordinate [4Fe-4S] cluster.

The protein belongs to the aconitase/IPM isomerase family. LeuC type 1 subfamily. In terms of assembly, heterodimer of LeuC and LeuD. The cofactor is [4Fe-4S] cluster.

The catalysed reaction is (2R,3S)-3-isopropylmalate = (2S)-2-isopropylmalate. It functions in the pathway amino-acid biosynthesis; L-leucine biosynthesis; L-leucine from 3-methyl-2-oxobutanoate: step 2/4. Catalyzes the isomerization between 2-isopropylmalate and 3-isopropylmalate, via the formation of 2-isopropylmaleate. The protein is 3-isopropylmalate dehydratase large subunit of Rhodopirellula baltica (strain DSM 10527 / NCIMB 13988 / SH1).